Consider the following 273-residue polypeptide: Putative pyruvate, phosphate dikinase regulatory protein (273 aa).

153 to 160 (GISRTSKT) serves as a coordination point for ADP.

It belongs to the pyruvate, phosphate/water dikinase regulatory protein family. PDRP subfamily.

The catalysed reaction is N(tele)-phospho-L-histidyl/L-threonyl-[pyruvate, phosphate dikinase] + ADP = N(tele)-phospho-L-histidyl/O-phospho-L-threonyl-[pyruvate, phosphate dikinase] + AMP + H(+). It catalyses the reaction N(tele)-phospho-L-histidyl/O-phospho-L-threonyl-[pyruvate, phosphate dikinase] + phosphate + H(+) = N(tele)-phospho-L-histidyl/L-threonyl-[pyruvate, phosphate dikinase] + diphosphate. Functionally, bifunctional serine/threonine kinase and phosphorylase involved in the regulation of the pyruvate, phosphate dikinase (PPDK) by catalyzing its phosphorylation/dephosphorylation. This Agrobacterium fabrum (strain C58 / ATCC 33970) (Agrobacterium tumefaciens (strain C58)) protein is Putative pyruvate, phosphate dikinase regulatory protein.